Here is a 236-residue protein sequence, read N- to C-terminus: Small ribosomal subunit protein uS10m (236 aa).

The transit peptide at 1-24 directs the protein to the mitochondrion; that stretch reads MMRQSIRPLRAFSSEVSWIARRTQ. The tract at residues 29–49 is disordered; it reads KPGDLVPNKPEPSKNEQEPRF. Positions 39 to 49 are enriched in basic and acidic residues; sequence EPSKNEQEPRF.

This sequence belongs to the universal ribosomal protein uS10 family. As to quaternary structure, part of the mitochondrial small ribosomal subunit.

It is found in the mitochondrion. Involved in mitochondrial genome encoded proteins translation. Involved in the binding of tRNA to the ribosomes. The sequence is that of Small ribosomal subunit protein uS10m (RSM10) from Gibberella zeae (strain ATCC MYA-4620 / CBS 123657 / FGSC 9075 / NRRL 31084 / PH-1) (Wheat head blight fungus).